A 186-amino-acid polypeptide reads, in one-letter code: Peptidyl-tRNA hydrolase (186 aa).

A tRNA-binding site is contributed by tyrosine 14. Histidine 19 (proton acceptor) is an active-site residue. The tRNA site is built by tyrosine 61, asparagine 63, and asparagine 107.

It belongs to the PTH family. As to quaternary structure, monomer.

The protein localises to the cytoplasm. The catalysed reaction is an N-acyl-L-alpha-aminoacyl-tRNA + H2O = an N-acyl-L-amino acid + a tRNA + H(+). Hydrolyzes ribosome-free peptidyl-tRNAs (with 1 or more amino acids incorporated), which drop off the ribosome during protein synthesis, or as a result of ribosome stalling. Functionally, catalyzes the release of premature peptidyl moieties from peptidyl-tRNA molecules trapped in stalled 50S ribosomal subunits, and thus maintains levels of free tRNAs and 50S ribosomes. The polypeptide is Peptidyl-tRNA hydrolase (Helicobacter acinonychis (strain Sheeba)).